The chain runs to 208 residues: FMN-dependent NADH:quinone oxidoreductase 4 (208 aa).

This sequence belongs to the azoreductase type 1 family. Homodimer. FMN serves as cofactor.

The catalysed reaction is 2 a quinone + NADH + H(+) = 2 a 1,4-benzosemiquinone + NAD(+). The enzyme catalyses N,N-dimethyl-1,4-phenylenediamine + anthranilate + 2 NAD(+) = 2-(4-dimethylaminophenyl)diazenylbenzoate + 2 NADH + 2 H(+). In terms of biological role, quinone reductase that provides resistance to thiol-specific stress caused by electrophilic quinones. Functionally, also exhibits azoreductase activity. Catalyzes the reductive cleavage of the azo bond in aromatic azo compounds to the corresponding amines. The polypeptide is FMN-dependent NADH:quinone oxidoreductase 4 (Bacillus cereus (strain ATCC 10987 / NRS 248)).